We begin with the raw amino-acid sequence, 132 residues long: Small ribosomal subunit protein uS8c (132 aa).

Belongs to the universal ribosomal protein uS8 family. Part of the 30S ribosomal subunit.

The protein resides in the plastid. It is found in the chloroplast. Functionally, one of the primary rRNA binding proteins, it binds directly to 16S rRNA central domain where it helps coordinate assembly of the platform of the 30S subunit. This chain is Small ribosomal subunit protein uS8c (rps8), found in Liriodendron tulipifera (Tuliptree).